Reading from the N-terminus, the 246-residue chain is Probable transcriptional regulatory protein YebC (246 aa).

The tract at residues 1–20 is disordered; sequence MAGHSKWANTRHRKAAQDAK.

Belongs to the TACO1 family.

It localises to the cytoplasm. The sequence is that of Probable transcriptional regulatory protein YebC from Shigella dysenteriae serotype 1 (strain Sd197).